We begin with the raw amino-acid sequence, 180 residues long: MDLEKLKEETQIIIDDVLKQTEIKSGQVFVLGLSSSEVNGGLIGHASSAEIGQVIVSVIHKTLSDKGIYLAVQACEHLNRALLIEEELADKKDWEIVSVVPQLHAGGSGQVAAYQLFKSPVEVEHIVAQAGLDIGDTSIGMHVKHVQIPVRPISKELGGAHVTALKSRPKLIGGERARYE.

Belongs to the UPF0340 family.

The polypeptide is UPF0340 protein llmg_0465 (Lactococcus lactis subsp. cremoris (strain MG1363)).